An 876-amino-acid polypeptide reads, in one-letter code: DNA polymerase 1 (876 aa).

It belongs to the DNA polymerase type-B family.

It catalyses the reaction DNA(n) + a 2'-deoxyribonucleoside 5'-triphosphate = DNA(n+1) + diphosphate. Its function is as follows. This polymerase possesses two enzymatic activities: DNA synthesis (polymerase) and an exonucleolytic activity that degrades single-stranded DNA in the 3'- to 5'-direction. This chain is DNA polymerase 1 (dpo1), found in Sulfolobus acidocaldarius (strain ATCC 33909 / DSM 639 / JCM 8929 / NBRC 15157 / NCIMB 11770).